The primary structure comprises 938 residues: Isoleucine--tRNA ligase (938 aa).

The short motif at P58 to H68 is the 'HIGH' region element. An L-isoleucyl-5'-AMP-binding site is contributed by E566. Residues K607–S611 carry the 'KMSKS' region motif. K610 contributes to the ATP binding site. C906, C909, C926, and C929 together coordinate Zn(2+).

The protein belongs to the class-I aminoacyl-tRNA synthetase family. IleS type 1 subfamily. As to quaternary structure, monomer. The cofactor is Zn(2+).

The protein localises to the cytoplasm. The catalysed reaction is tRNA(Ile) + L-isoleucine + ATP = L-isoleucyl-tRNA(Ile) + AMP + diphosphate. In terms of biological role, catalyzes the attachment of isoleucine to tRNA(Ile). As IleRS can inadvertently accommodate and process structurally similar amino acids such as valine, to avoid such errors it has two additional distinct tRNA(Ile)-dependent editing activities. One activity is designated as 'pretransfer' editing and involves the hydrolysis of activated Val-AMP. The other activity is designated 'posttransfer' editing and involves deacylation of mischarged Val-tRNA(Ile). The polypeptide is Isoleucine--tRNA ligase (Nitratidesulfovibrio vulgaris (strain DP4) (Desulfovibrio vulgaris)).